The chain runs to 509 residues: Aspartyl/glutamyl-tRNA(Asn/Gln) amidotransferase subunit B (509 aa).

It belongs to the GatB/GatE family. GatB subfamily. Heterotrimer of A, B and C subunits.

The enzyme catalyses L-glutamyl-tRNA(Gln) + L-glutamine + ATP + H2O = L-glutaminyl-tRNA(Gln) + L-glutamate + ADP + phosphate + H(+). It catalyses the reaction L-aspartyl-tRNA(Asn) + L-glutamine + ATP + H2O = L-asparaginyl-tRNA(Asn) + L-glutamate + ADP + phosphate + 2 H(+). Functionally, allows the formation of correctly charged Asn-tRNA(Asn) or Gln-tRNA(Gln) through the transamidation of misacylated Asp-tRNA(Asn) or Glu-tRNA(Gln) in organisms which lack either or both of asparaginyl-tRNA or glutaminyl-tRNA synthetases. The reaction takes place in the presence of glutamine and ATP through an activated phospho-Asp-tRNA(Asn) or phospho-Glu-tRNA(Gln). The sequence is that of Aspartyl/glutamyl-tRNA(Asn/Gln) amidotransferase subunit B from Psychrobacter arcticus (strain DSM 17307 / VKM B-2377 / 273-4).